The chain runs to 297 residues: CCAAT/enhancer-binding protein beta (297 aa).

Residues 1-22 (MHRLLAWDAACLPPPPAAFRPM) form a required for Lys-134 sumoylation region. Residue Arg3 is modified to Asymmetric dimethylarginine; by CARM1. The interval 22-105 (MEVANFYYEP…YGAKPSKKPS (84 aa)) is required for MYC transcriptional repression. N6-acetyllysine; alternate is present on Lys39. Residue Lys39 is modified to N6-methylated lysine; alternate. An N6-acetyllysine; by KAT2A and KAT2B mark is found at Lys99 and Lys102. Lys103 carries the N6-acetyllysine; by KAT2A and KAT2B; alternate modification. Lys103 participates in a covalent cross-link: Glycyl lysine isopeptide (Lys-Gly) (interchain with G-Cter in SUMO2); alternate. Position 105 is a phosphoserine; by RPS6KA1 and PKC/PRKCA (Ser105). Lys134 is covalently cross-linked (Glycyl lysine isopeptide (Lys-Gly) (interchain with G-Cter in SUMO2); alternate). A Glycyl lysine isopeptide (Lys-Gly) (interchain with G-Cter in SUMO); alternate cross-link involves residue Lys134. Residue Lys145 forms a Glycyl lysine isopeptide (Lys-Gly) (interchain with G-Cter in SUMO2) linkage. Residues 172-201 (SGSSGSLSTSSSSSPPGTPSPADAKAAPAA) are disordered. Thr180 is subject to Phosphothreonine; by GSK3-beta. Residues Ser181 and Ser182 are each glycosylated (O-linked (GlcNAc) serine). Ser185 is modified (phosphoserine; by GSK3-beta). Position 189 is a phosphothreonine; by RPS6KA1, CDK2 and MAPK (Thr189). Residues Lys212 and Lys214 each participate in a glycyl lysine isopeptide (Lys-Gly) (interchain with G-Cter in SUMO2) cross-link. The 64-residue stretch at 223–286 (SDEYKMRRER…STLRNLFKQL (64 aa)) folds into the bZIP domain. The tract at residues 227-247 (KMRRERNNIAVRKSRDKAKMR) is basic motif. Phosphoserine; by PKC/PRKCA is present on Ser240. The interval 249–256 (LETQHKVL) is leucine-zipper. The residue at position 277 (Ser277) is a Phosphoserine; by CaMK2. Residue Lys284 forms a Glycyl lysine isopeptide (Lys-Gly) (interchain with G-Cter in SUMO2) linkage.

This sequence belongs to the bZIP family. C/EBP subfamily. As to quaternary structure, binds DNA as a homodimer and as a heterodimer. Interacts with MYB; within the complex, MYB and CEBPB bind to different promoter regions. Interacts with ATF4. Binds DNA as a heterodimer with ATF4. Can form stable heterodimers with CEBPA, CEBPD, CEBPE and CEBPG. Interacts with SIX1. Isoform 2 and isoform 3 also form heterodimers. Interacts with TRIM28 and PTGES2. Interacts with PRDM16. Interacts with CCDC85B. Forms a complex with THOC5. Interacts with ZNF638; this interaction increases transcriptional activation. Interacts with CIDEA and CIDEC; these interactions increase transcriptional activation of a subset of CEBPB downstream target genes. Interacts with DDIT3/CHOP. Interacts with EP300; recruits EP300 to chromatin. Interacts with RORA; the interaction disrupts interaction with EP300. Interacts (not methylated) with MED23, MED26, SMARCA2, SMARCB1 and SMARCC1. Interacts with KAT2A and KAT2B. Interacts with ATF5; EP300 is required for ATF5 and CEBPB interaction and DNA binding. Interacts with NFE2L1; the heterodimer represses expression of DSPP during odontoblast differentiation. Phosphorylated at Thr-189 by MAPK and CDK2, serves to prime phosphorylation at Thr-180 and Ser-185 by GSK3B and acquire DNA-binding as well as transactivation activities, required to induce adipogenesis. MAPK and CDK2 act sequentially to maintain Thr-189 in the primed phosphorylated state during mitotical cloning expansion and thereby progression of terminal differentiation. Phosphorylation at Ser-105 enhances transactivation activity. Phosphorylation at Ser-277 in response to calcium increases transactivation activity. Phosphorylated at Thr-189 by RPS6KA1. In terms of processing, methylated. Methylation at Arg-3 by CARM1 and at Lys-39 by EHMT2 inhibit transactivation activity. Methylation is probably inhibited by phosphorylation at Thr-189. Post-translationally, sumoylated by polymeric chains of SUMO2 or SUMO3. Sumoylation at Lys-134 is required for inhibition of T-cells proliferation. In adipocytes, sumoylation at Lys-134 by PIAS1 leads to ubiquitination and subsequent proteasomal degradation. Desumoylated by SENP2, which abolishes ubiquitination and stabilizes protein levels. Ubiquitinated, leading to proteasomal degradation. In terms of processing, O-glycosylated, glycosylation at Ser-181 and Ser-182 prevents phosphorylation on Thr-189, Ser-185 and Thr-180 and DNA binding activity which delays the adipocyte differentiation program. Post-translationally, acetylated. Acetylation at Lys-39 is an important and dynamic regulatory event that contributes to its ability to transactivate target genes, including those associated with adipogenesis and adipocyte function. Deacetylation by HDAC1 represses its transactivation activity. Acetylated by KAT2A and KAT2B within a cluster of lysine residues between amino acids 99-103, this acetylation is strongly induced by glucocorticoid treatment and enhances transactivation activity. In terms of tissue distribution, liver and lung.

Its subcellular location is the nucleus. It is found in the cytoplasm. Important transcription factor regulating the expression of genes involved in immune and inflammatory responses. Also plays a significant role in adipogenesis, as well as in the gluconeogenic pathway, liver regeneration, and hematopoiesis. The consensus recognition site is 5'-T[TG]NNGNAA[TG]-3'. Its functional capacity is governed by protein interactions and post-translational protein modifications. During early embryogenesis, plays essential and redundant roles with CEBPA. Has a promitotic effect on many cell types such as hepatocytes and adipocytes but has an antiproliferative effect on T-cells by repressing MYC expression, facilitating differentiation along the T-helper 2 lineage. Binds to regulatory regions of several acute-phase and cytokines genes and plays a role in the regulation of acute-phase reaction and inflammation. Also plays a role in intracellular bacteria killing. During adipogenesis, is rapidly expressed and, after activation by phosphorylation, induces CEBPA and PPARG, which turn on the series of adipocyte genes that give rise to the adipocyte phenotype. The delayed transactivation of the CEBPA and PPARG genes by CEBPB appears necessary to allow mitotic clonal expansion and thereby progression of terminal differentiation. Essential for female reproduction because of a critical role in ovarian follicle development. Restricts osteoclastogenesis: together with NFE2L1; represses expression of DSPP during odontoblast differentiation. Its function is as follows. Essential for gene expression induction in activated macrophages. Plays a major role in immune responses such as CD4(+) T-cell response, granuloma formation and endotoxin shock. Not essential for intracellular bacteria killing. In terms of biological role, acts as a dominant negative through heterodimerization with isoform 2. Promotes osteoblast differentiation and osteoclastogenesis. The protein is CCAAT/enhancer-binding protein beta of Rattus norvegicus (Rat).